The chain runs to 748 residues: Protein REPRESSOR OF SILENCING 3 (748 aa).

The RRM domain maps to 10–86 (VRLHVGGLGE…GRLRLEKAKE (77 aa)). Disordered regions lie at residues 244–318 (KSIL…QSID), 350–531 (GSSK…VSDT), 579–600 (VDEE…GGSS), and 729–748 (EWAK…NSEE). Residues 266-288 (THPSKNRQTISLEETGRQESSQA) show a composition bias toward polar residues. Basic and acidic residues predominate over residues 294–314 (KPSEVVPDKSSDEPSRTKDLE). Residues 373–382 (LKKKTKRKRV) show a composition bias toward basic residues. 3 stretches are compositionally biased toward acidic residues: residues 403–416 (DTMA…DSDA), 439–472 (DDSD…DAVE), and 491–518 (ESDD…DVGS). Positions 520-531 (DSGSLADTVSDT) are enriched in polar residues.

In terms of tissue distribution, ubiquitously expressed.

It localises to the nucleus. The protein resides in the nucleolus. It is found in the nucleoplasm. In terms of biological role, RNA-binding protein required for DNA demethylation and to eluviate siRNA-mediated transcriptional gene silencing (TGS), probably by guiding ROS1. Can bind specifically single stranded G-rich RNAs of 21-, 24- or 26-nt corresponding to promoter sequence of target genes; this interaction directs demethylation of target sequences. The protein is Protein REPRESSOR OF SILENCING 3 of Arabidopsis thaliana (Mouse-ear cress).